The primary structure comprises 558 residues: uncharacterized protein (558 aa).

The region spanning 7 to 206 (SNFIDMLRLG…FACFLEGMLS (200 aa)) is the DhaL domain.

This is an uncharacterized protein from Mycoplasma pneumoniae (strain ATCC 29342 / M129 / Subtype 1) (Mycoplasmoides pneumoniae).